We begin with the raw amino-acid sequence, 251 residues long: Fibroblast growth factor 23 (251 aa).

Residues 1 to 24 (MLGACLRLLVGALCTVCSLGTARA) form the signal peptide. Cys-95 and Cys-113 are oxidised to a cystine. O-linked (GalNAc) threonine glycans are attached at residues Thr-171 and Thr-178. Positions 175-251 (RRHTRSAEDP…DRCRPFPRFV (77 aa)) are disordered. The span at 179 to 189 (RSAEDPPERDP) shows a compositional bias: basic and acidic residues. Position 180 is a phosphoserine; by FAM20C (Ser-180).

It belongs to the heparin-binding growth factors family. Interacts with FGFR1, FGFR2, FGFR3 and FGFR4. Affinity between fibroblast growth factors (FGFs) and their receptors is increased by KL and heparan sulfate glycosaminoglycans that function as coreceptors. Following secretion this protein is inactivated by cleavage into a N-terminal fragment and a C-terminal fragment. The processing is effected by proprotein convertases. In terms of processing, O-glycosylated at Thr-171 and Thr-178 by GALNT3 and glycosylation of Thr-178 requires previous glycosylation at Thr171. Glycosylation is necessary for secretion; it blocks processing by proprotein convertases when the O-glycan is alpha 2,6-sialylated. Competition between proprotein convertase cleavage and block of cleavage by O-glycosylation determines the level of secreted active FGF23. Post-translationally, phosphorylation at Ser-180 mediated by FAM20C slows down glycosylation at Thr-178 notably. As to expression, expressed in the parathyroid.

It localises to the secreted. In terms of biological role, regulator of phosphate homeostasis. Inhibits renal tubular phosphate transport by reducing SLC34A1 levels. Regulator of vitamin-D metabolism. Negatively regulates osteoblasts differentiation and matrix mineralization. Acts directly on the parathyroid to decrease PTH secretion. Up-regulates EGR1 expression in the presence of KL. This Rattus norvegicus (Rat) protein is Fibroblast growth factor 23 (Fgf23).